A 156-amino-acid chain; its full sequence is Ribonuclease H (156 aa).

The RNase H type-1 domain maps to 1–142 (MNKQVEIFTD…CDELARQAAE (142 aa)). Mg(2+)-binding residues include D10, E48, D70, and D134. Positions 135 to 156 (ELARQAAENPTEDDIGYQPEPQ) are disordered.

Belongs to the RNase H family. Monomer. It depends on Mg(2+) as a cofactor.

It is found in the cytoplasm. The catalysed reaction is Endonucleolytic cleavage to 5'-phosphomonoester.. Functionally, endonuclease that specifically degrades the RNA of RNA-DNA hybrids. The sequence is that of Ribonuclease H from Vibrio cholerae serotype O1 (strain M66-2).